The sequence spans 367 residues: MEEFVNPCKIKVIGVGGGGSNAVNRMYEDGIEGVELYAINTDVQHLSTLKVPNKIQIGEKVTRGLGAGAKPEVGEEAALEDIDKIKEILRDTDMVFISAGLGGGTGTGAAPVIAKTAKEMGILTVAVATLPFRFEGPRKMEKALKGLEKLKESSDAYIVIHNDKIKELSNRTLTIKDAFKEVDSVLSKAVRGITSIVVTPAVINVDFADVRTTLEEGGLSIIGMGEGRGDEKADIAVEKAVTSPLLEGNTIEGARRLLVTIWTSEDIPYDIVDEVMERIHSKVHPEAEIIFGAVLEPQEQDFIRVAIVATDFPEEKFQVGEKEVKFKVIKKEEKEEPKEEPKPLSDTTYLEEEEIPAVIRRKNKRLL.

GTP contacts are provided by residues glycine 17–asparagine 21, glycine 104–glycine 106, glutamate 135, lysine 139, and aspartate 183.

It belongs to the FtsZ family. Homodimer. Polymerizes to form a dynamic ring structure in a strictly GTP-dependent manner. Interacts directly with several other division proteins.

It localises to the cytoplasm. In terms of biological role, essential cell division protein that forms a contractile ring structure (Z ring) at the future cell division site. The regulation of the ring assembly controls the timing and the location of cell division. One of the functions of the FtsZ ring is to recruit other cell division proteins to the septum to produce a new cell wall between the dividing cells. Binds GTP and shows GTPase activity. This chain is Cell division protein FtsZ, found in Aquifex aeolicus (strain VF5).